Consider the following 406-residue polypeptide: Arginine biosynthesis bifunctional protein ArgJ (406 aa).

The substrate site is built by Thr154, Lys180, Thr191, Glu278, Asn401, and Thr406. Catalysis depends on Thr191, which acts as the Nucleophile.

The protein belongs to the ArgJ family. In terms of assembly, heterotetramer of two alpha and two beta chains.

The protein resides in the cytoplasm. It catalyses the reaction N(2)-acetyl-L-ornithine + L-glutamate = N-acetyl-L-glutamate + L-ornithine. It carries out the reaction L-glutamate + acetyl-CoA = N-acetyl-L-glutamate + CoA + H(+). Its pathway is amino-acid biosynthesis; L-arginine biosynthesis; L-ornithine and N-acetyl-L-glutamate from L-glutamate and N(2)-acetyl-L-ornithine (cyclic): step 1/1. It functions in the pathway amino-acid biosynthesis; L-arginine biosynthesis; N(2)-acetyl-L-ornithine from L-glutamate: step 1/4. Functionally, catalyzes two activities which are involved in the cyclic version of arginine biosynthesis: the synthesis of N-acetylglutamate from glutamate and acetyl-CoA as the acetyl donor, and of ornithine by transacetylation between N(2)-acetylornithine and glutamate. The sequence is that of Arginine biosynthesis bifunctional protein ArgJ from Gloeobacter violaceus (strain ATCC 29082 / PCC 7421).